An 89-amino-acid chain; its full sequence is CRISPR-associated endoribonuclease Cas2 2 (89 aa).

Aspartate 9 contacts Mg(2+).

This sequence belongs to the CRISPR-associated endoribonuclease Cas2 protein family. In terms of assembly, homodimer, forms a heterotetramer with a Cas1 homodimer. It depends on Mg(2+) as a cofactor.

Functionally, CRISPR (clustered regularly interspaced short palindromic repeat), is an adaptive immune system that provides protection against mobile genetic elements (viruses, transposable elements and conjugative plasmids). CRISPR clusters contain sequences complementary to antecedent mobile elements and target invading nucleic acids. CRISPR clusters are transcribed and processed into CRISPR RNA (crRNA). Functions as a ssRNA-specific endoribonuclease. Involved in the integration of spacer DNA into the CRISPR cassette. This Methanospirillum hungatei JF-1 (strain ATCC 27890 / DSM 864 / NBRC 100397 / JF-1) protein is CRISPR-associated endoribonuclease Cas2 2.